The chain runs to 35 residues: Conotoxin M11.2 (35 aa).

4 cysteine pairs are disulfide-bonded: Cys2/Cys16, Cys9/Cys21, Cys15/Cys26, and Cys20/Cys33.

This sequence belongs to the conotoxin I1 superfamily. As to expression, expressed by the venom duct.

It is found in the secreted. The chain is Conotoxin M11.2 from Conus magus (Magical cone).